The primary structure comprises 61 residues: Small ribosomal subunit protein uS14 (61 aa).

The Zn(2+) site is built by Cys-24, Cys-27, Cys-40, and Cys-43.

This sequence belongs to the universal ribosomal protein uS14 family. Zinc-binding uS14 subfamily. As to quaternary structure, part of the 30S ribosomal subunit. Contacts proteins S3 and S10. Zn(2+) is required as a cofactor.

Binds 16S rRNA, required for the assembly of 30S particles and may also be responsible for determining the conformation of the 16S rRNA at the A site. This chain is Small ribosomal subunit protein uS14, found in Mycoplasma capricolum subsp. capricolum (strain California kid / ATCC 27343 / NCTC 10154).